The following is a 100-amino-acid chain: Osteocalcin (100 aa).

An N-terminal signal peptide occupies residues 1 to 23 (MRALTLLALLALAALCIAGQAGA). Positions 24–51 (KPSGAESSKGAAFVSKQEGSEVVKRPRR) are excised as a propeptide. The 47-residue stretch at 52 to 98 (YLYQWLGAPVPYPDTLEPRREVCELNPDCDELADHIGFQEAYRRFYG) folds into the Gla domain. Ca(2+)-binding residues include E68, E72, E75, and D81. E68, E72, and E75 each carry 4-carboxyglutamate. Cysteines 74 and 80 form a disulfide.

This sequence belongs to the osteocalcin/matrix Gla protein family. In terms of processing, gamma-carboxyglutamate residues are formed by vitamin K dependent carboxylation by GGCX. These residues are essential for the binding of calcium. Decarboxylation promotes the hormone activity.

Its subcellular location is the secreted. Functionally, the carboxylated form is one of the main organic components of the bone matrix, which constitutes 1-2% of the total bone protein: it acts as a negative regulator of bone formation and is required to limit bone formation without impairing bone resorption or mineralization. The carboxylated form binds strongly to apatite and calcium. Its function is as follows. The uncarboxylated form acts as a hormone secreted by osteoblasts, which regulates different cellular processes, such as energy metabolism, male fertility and brain development. Regulates of energy metabolism by acting as a hormone favoring pancreatic beta-cell proliferation, insulin secretion and sensitivity and energy expenditure. Uncarboxylated osteocalcin hormone also promotes testosterone production in the testes: acts as a ligand for G protein-coupled receptor GPRC6A at the surface of Leydig cells, initiating a signaling response that promotes the expression of enzymes required for testosterone synthesis in a CREB-dependent manner. Also acts as a regulator of brain development: osteocalcin hormone crosses the blood-brain barrier and acts as a ligand for GPR158 on neurons, initiating a signaling response that prevents neuronal apoptosis in the hippocampus, favors the synthesis of all monoamine neurotransmitters and inhibits that of gamma-aminobutyric acid (GABA). Osteocalcin also crosses the placenta during pregnancy and maternal osteocalcin is required for fetal brain development. The sequence is that of Osteocalcin from Pan troglodytes (Chimpanzee).